A 177-amino-acid chain; its full sequence is Cytidylate kinase (177 aa).

An ATP-binding site is contributed by 7–15 (GSPGSGTTT).

This sequence belongs to the cytidylate kinase family. Type 2 subfamily.

It localises to the cytoplasm. The enzyme catalyses CMP + ATP = CDP + ADP. The catalysed reaction is dCMP + ATP = dCDP + ADP. This chain is Cytidylate kinase, found in Methanocorpusculum labreanum (strain ATCC 43576 / DSM 4855 / Z).